A 299-amino-acid polypeptide reads, in one-letter code: ATP phosphoribosyltransferase (299 aa).

The protein belongs to the ATP phosphoribosyltransferase family. Long subfamily. Requires Mg(2+) as cofactor.

It is found in the cytoplasm. The catalysed reaction is 1-(5-phospho-beta-D-ribosyl)-ATP + diphosphate = 5-phospho-alpha-D-ribose 1-diphosphate + ATP. Its pathway is amino-acid biosynthesis; L-histidine biosynthesis; L-histidine from 5-phospho-alpha-D-ribose 1-diphosphate: step 1/9. Its activity is regulated as follows. Feedback inhibited by histidine. In terms of biological role, catalyzes the condensation of ATP and 5-phosphoribose 1-diphosphate to form N'-(5'-phosphoribosyl)-ATP (PR-ATP). Has a crucial role in the pathway because the rate of histidine biosynthesis seems to be controlled primarily by regulation of HisG enzymatic activity. This is ATP phosphoribosyltransferase from Shewanella pealeana (strain ATCC 700345 / ANG-SQ1).